The following is a 621-amino-acid chain: Threonine--tRNA ligase (621 aa).

Residues 1–137 (MRILQLHCDS…ESSKVVTKDS (137 aa)) are editing domain. Positions 128–150 (ESSKVVTKDSTTKDDDEDTSDAL) are disordered. Residues 202 to 501 (PHVALMKKLA…SKKGKKPQLP (300 aa)) form a catalytic region. Zn(2+) contacts are provided by C294, H346, and H470. The segment covering 598–612 (QTSGKPYTGLNQSQH) has biased composition (polar residues). A disordered region spans residues 598 to 621 (QTSGKPYTGLNQSQHLSKRPQLMV).

Belongs to the class-II aminoacyl-tRNA synthetase family. In terms of assembly, homodimer. Zn(2+) is required as a cofactor.

The protein localises to the cytoplasm. The enzyme catalyses tRNA(Thr) + L-threonine + ATP = L-threonyl-tRNA(Thr) + AMP + diphosphate + H(+). Functionally, catalyzes the attachment of threonine to tRNA(Thr) in a two-step reaction: L-threonine is first activated by ATP to form Thr-AMP and then transferred to the acceptor end of tRNA(Thr). Also edits incorrectly charged L-seryl-tRNA(Thr). In Nitrosopumilus maritimus (strain SCM1), this protein is Threonine--tRNA ligase.